A 666-amino-acid chain; its full sequence is MRTSRVASPPPSPKDHDTWAIATDLARPHTLRILTHQNQTTGLLTPPHAAFLPDPNLPRRLPFPSSSSTPTAAAPPDSGEPSRARARTETYRTGDMNPYDLRYADPSSYRDRRSDLAGAPVLAASAPAAANPYAAAYAPAPAAPVAPAGGDFSRFGGRGRGGGAGGGGWGRGGGGGGGAGGYRGGGGRGGGRDALDSLSLPKPDFRSLIPFEKNFYVECPAVQAMSDMDVSQYRRQRDITVEGHDVPKPVRYFQEANFPDYCMQAIAKSGFVEPTPIQSQGWPMALKGRDMIGIAQTGSGKTLSYLLPGLVHVGAQPRLEQGDGPIVLILAPTRELAVQIQQESGKFGSYSRTRSTCIYGGAPKGPQIRDLRRGVEIVIATPGRLIDMLEGGHTNLRRVTYLVLDEADRMLDMGFEPQIRKIVAQIRPDRQTLYWSATWPREVESLARQFLQNPYKVIIGSPDLKANHSIQQIIEVISEHEKYPRLSKLLSDLMDGSRILIFFQTKKDCDKVTRQLRMDGWPALSIHGDKAQAERDYVLAEFKSGKSPIMAATDVAARGLDVKDIKCVINFDFPTTLEDYIHRIGRTGRAGASGTAFTFFTLSNAKFSRNLVKILREAGQVVNPALESMAKSASSMGGGNFRSRGRGGFGNRSGSNSIPIRGRRPY.

The tract at residues 53 to 102 is disordered; it reads PDPNLPRRLPFPSSSSTPTAAAPPDSGEPSRARARTETYRTGDMNPYDLR. The segment covering 64–76 has biased composition (low complexity); it reads PSSSSTPTAAAPP. Residues 80 to 92 are compositionally biased toward basic and acidic residues; it reads EPSRARARTETYR. Residues 251–279 carry the Q motif motif; the sequence is RYFQEANFPDYCMQAIAKSGFVEPTPIQS. One can recognise a Helicase ATP-binding domain in the interval 282–457; it reads WPMALKGRDM…RQFLQNPYKV (176 aa). 295-302 is an ATP binding site; it reads AQTGSGKT. The DEAD box motif lies at 405–408; sequence DEAD. Positions 485 to 630 constitute a Helicase C-terminal domain; sequence RLSKLLSDLM…VVNPALESMA (146 aa). The interval 632-666 is disordered; the sequence is SASSMGGGNFRSRGRGGFGNRSGSNSIPIRGRRPY. Positions 636 to 651 are enriched in gly residues; it reads MGGGNFRSRGRGGFGN.

Belongs to the DEAD box helicase family. DDX5/DBP2 subfamily.

Its subcellular location is the nucleus. The enzyme catalyses ATP + H2O = ADP + phosphate + H(+). ATP-dependent RNA helicase involved nonsense-mediated mRNA decay and ribosome biogenesis through rRNA processing. The chain is DEAD-box ATP-dependent RNA helicase 30 from Oryza sativa subsp. japonica (Rice).